Consider the following 284-residue polypeptide: L-ribulose-5-phosphate 3-epimerase UlaE (284 aa).

It belongs to the L-ribulose-5-phosphate 3-epimerase family.

The enzyme catalyses L-ribulose 5-phosphate = L-xylulose 5-phosphate. It functions in the pathway cofactor degradation; L-ascorbate degradation; D-xylulose 5-phosphate from L-ascorbate: step 3/4. Functionally, catalyzes the isomerization of L-xylulose-5-phosphate to L-ribulose-5-phosphate. Is involved in the anaerobic L-ascorbate utilization. This is L-ribulose-5-phosphate 3-epimerase UlaE from Escherichia coli (strain ATCC 8739 / DSM 1576 / NBRC 3972 / NCIMB 8545 / WDCM 00012 / Crooks).